Here is a 194-residue protein sequence, read N- to C-terminus: Ribonuclease HII (194 aa).

One can recognise an RNase H type-2 domain in the interval 3–193 (ILTAGVDEAG…VRNLLAQQTL (191 aa)). Asp-9, Glu-10, and Asp-101 together coordinate a divalent metal cation.

This sequence belongs to the RNase HII family. It depends on Mn(2+) as a cofactor. Mg(2+) is required as a cofactor.

The protein resides in the cytoplasm. It catalyses the reaction Endonucleolytic cleavage to 5'-phosphomonoester.. In terms of biological role, endonuclease that specifically degrades the RNA of RNA-DNA hybrids. The polypeptide is Ribonuclease HII (Neisseria meningitidis serogroup C (strain 053442)).